A 66-amino-acid chain; its full sequence is Large ribosomal subunit protein bL33c (66 aa).

This sequence belongs to the bacterial ribosomal protein bL33 family.

Its subcellular location is the plastid. The protein localises to the chloroplast. In Glycine max (Soybean), this protein is Large ribosomal subunit protein bL33c.